A 420-amino-acid polypeptide reads, in one-letter code: Protein TabA (420 aa).

Position 57 is an N6-(pyridoxal phosphate)lysine (Lys57).

This sequence belongs to the Orn/Lys/Arg decarboxylase class-II family. It depends on pyridoxal 5'-phosphate as a cofactor.

Involved in tabtoxin production and pathogenicity. This Pseudomonas amygdali pv. tabaci (Pseudomonas syringae pv. tabaci) protein is Protein TabA (tabA).